A 513-amino-acid polypeptide reads, in one-letter code: Cytochrome P450 1A2 (513 aa).

The O-linked (GlcNAc) serine glycan is linked to serine 68. Residue phenylalanine 225 coordinates substrate. Cysteine 456 serves as a coordination point for heme.

This sequence belongs to the cytochrome P450 family. As to quaternary structure, interacts with PGRMC1; the interaction requires PGRMC1 homodimerization. It depends on heme as a cofactor.

It is found in the endoplasmic reticulum membrane. The protein resides in the microsome membrane. It catalyses the reaction an organic molecule + reduced [NADPH--hemoprotein reductase] + O2 = an alcohol + oxidized [NADPH--hemoprotein reductase] + H2O + H(+). The enzyme catalyses 17beta-estradiol + reduced [NADPH--hemoprotein reductase] + O2 = 2-hydroxy-17beta-estradiol + oxidized [NADPH--hemoprotein reductase] + H2O + H(+). It carries out the reaction 17beta-estradiol + reduced [NADPH--hemoprotein reductase] + O2 = 4-hydroxy-17beta-estradiol + oxidized [NADPH--hemoprotein reductase] + H2O + H(+). The catalysed reaction is estrone + reduced [NADPH--hemoprotein reductase] + O2 = 2-hydroxyestrone + oxidized [NADPH--hemoprotein reductase] + H2O + H(+). It catalyses the reaction estrone + reduced [NADPH--hemoprotein reductase] + O2 = 4-hydroxyestrone + oxidized [NADPH--hemoprotein reductase] + H2O + H(+). The enzyme catalyses cholesterol + reduced [NADPH--hemoprotein reductase] + O2 = 25-hydroxycholesterol + oxidized [NADPH--hemoprotein reductase] + H2O + H(+). It carries out the reaction all-trans-retinol + reduced [NADPH--hemoprotein reductase] + O2 = all-trans-retinal + oxidized [NADPH--hemoprotein reductase] + 2 H2O + H(+). The catalysed reaction is all-trans-retinal + reduced [NADPH--hemoprotein reductase] + O2 = all-trans-retinoate + oxidized [NADPH--hemoprotein reductase] + H2O + 2 H(+). It catalyses the reaction (5Z,8Z,11Z,14Z)-eicosatetraenoate + reduced [NADPH--hemoprotein reductase] + O2 = (14R,15S)-epoxy-(5Z,8Z,11Z)-eicosatrienoate + oxidized [NADPH--hemoprotein reductase] + H2O + H(+). The enzyme catalyses (5Z,8Z,11Z,14Z)-eicosatetraenoate + reduced [NADPH--hemoprotein reductase] + O2 = (14S,15R)-epoxy-(5Z,8Z,11Z)-eicosatrienoate + oxidized [NADPH--hemoprotein reductase] + H2O + H(+). It carries out the reaction (5Z,8Z,11Z,14Z,17Z)-eicosapentaenoate + reduced [NADPH--hemoprotein reductase] + O2 = (17R,18S)-epoxy-(5Z,8Z,11Z,14Z)-eicosatetraenoate + oxidized [NADPH--hemoprotein reductase] + H2O + H(+). The catalysed reaction is (4Z,7Z,10Z,13Z,16Z,19Z)-docosahexaenoate + reduced [NADPH--hemoprotein reductase] + O2 = (19R,20S)-epoxy-(4Z,7Z,10Z,13Z,16Z)-docosapentaenoate + oxidized [NADPH--hemoprotein reductase] + H2O + H(+). It catalyses the reaction (5S)-hydroperoxy-(6E,8Z,11Z,14Z)-eicosatetraenoate = 5-oxo-(6E,8Z,11Z,14Z)-eicosatetraenoate + H2O. The enzyme catalyses (12S)-hydroperoxy-(5Z,8Z,10E,14Z)-eicosatetraenoate = 12-oxo-(5Z,8Z,10E,14Z)-eicosatetraenoate + H2O. It carries out the reaction (15S)-hydroperoxy-(5Z,8Z,11Z,13E)-eicosatetraenoate = 15-oxo-(5Z,8Z,11Z,13E)-eicosatetraenoate + H2O. The catalysed reaction is (13S)-hydroperoxy-(9Z,11E)-octadecadienoate = 13-oxo-(9Z,11E)-octadecadienoate + H2O. It catalyses the reaction (5Z,8Z,11Z,14Z)-eicosatetraenoate + reduced [NADPH--hemoprotein reductase] + O2 = 13-hydroxy-(5Z,8Z,11Z,14Z)-eicosatetraenoate + oxidized [NADPH--hemoprotein reductase] + H2O + H(+). The enzyme catalyses (5Z,8Z,11Z,14Z)-eicosatetraenoate + reduced [NADPH--hemoprotein reductase] + O2 = 19-hydroxy-(5Z,8Z,11Z,14Z)-eicosatetraenoate + oxidized [NADPH--hemoprotein reductase] + H2O + H(+). It carries out the reaction (9Z,12Z)-octadecadienoate + reduced [NADPH--hemoprotein reductase] + O2 = 11-hydroxy-(9Z,12Z)-octadecadienoate + oxidized [NADPH--hemoprotein reductase] + H2O + H(+). It functions in the pathway cofactor metabolism; retinol metabolism. Its pathway is steroid metabolism; cholesterol metabolism. The protein operates within lipid metabolism; arachidonate metabolism. In terms of biological role, a cytochrome P450 monooxygenase involved in the metabolism of various endogenous substrates, including fatty acids, steroid hormones and vitamins. Mechanistically, uses molecular oxygen inserting one oxygen atom into a substrate, and reducing the second into a water molecule, with two electrons provided by NADPH via cytochrome P450 reductase (NADPH--hemoprotein reductase). Catalyzes the hydroxylation of carbon-hydrogen bonds. Exhibits high catalytic activity for the formation of hydroxyestrogens from estrone (E1) and 17beta-estradiol (E2), namely 2-hydroxy E1 and E2. Metabolizes cholesterol toward 25-hydroxycholesterol, a physiological regulator of cellular cholesterol homeostasis. May act as a major enzyme for all-trans retinoic acid biosynthesis in the liver. Catalyzes two successive oxidative transformation of all-trans retinol to all-trans retinal and then to the active form all-trans retinoic acid. Primarily catalyzes stereoselective epoxidation of the last double bond of polyunsaturated fatty acids (PUFA), displaying a strong preference for the (R,S) stereoisomer. Catalyzes bisallylic hydroxylation and omega-1 hydroxylation of PUFA. May also participate in eicosanoids metabolism by converting hydroperoxide species into oxo metabolites (lipoxygenase-like reaction, NADPH-independent). Plays a role in the oxidative metabolism of xenobiotics. Catalyzes the N-hydroxylation of heterocyclic amines and the O-deethylation of phenacetin. Metabolizes caffeine via N3-demethylation. The polypeptide is Cytochrome P450 1A2 (Cyp1a2) (Mus musculus (Mouse)).